A 196-amino-acid polypeptide reads, in one-letter code: Corticoliberin (196 aa).

A signal peptide spans 1–24 (MRLPLLLSAGVLLVVSLPCPPCRA). A propeptide spanning residues 25 to 153 (LLSRGPIPGA…RQETPERERR (129 aa)) is cleaved from the precursor. Residues 122 to 158 (PRRQLDSPAGPAERGEENALGSRQETPERERRSEEPP) form a disordered region. Residues 146–156 (ETPERERRSEE) show a composition bias toward basic and acidic residues. An Isoleucine amide modification is found at isoleucine 194.

This sequence belongs to the sauvagine/corticotropin-releasing factor/urotensin I family. In terms of assembly, interacts (via C-terminus) with CRFR1 (via N-terminal extracellular domain). As to expression, produced by the hypothalamus.

It localises to the secreted. Hormone regulating the release of corticotropin from pituitary gland. Induces NLRP6 in intestinal epithelial cells, hence may influence gut microbiota profile. In Canis lupus familiaris (Dog), this protein is Corticoliberin (CRH).